The sequence spans 461 residues: Transcription factor SOX-10 (461 aa).

Disordered regions lie at residues 1-60 (MADD…ADDD), 154-191 (LRMQ…GEAG), 205-268 (LDHR…DFGN), 350-369 (KAQV…DQPS), and 433-461 (AISD…LSRP). Over residues 30-42 (ASDNSSHLASSGN) the composition is skewed to polar residues. Positions 56-96 (EADDDKFPVCIREAVSQVLSGYDWTLVPMPVRVNGSNKSKP) are dimerization (DIM). A DNA-binding region (HMG box) is located at residues 98-166 (VKRPMNAFMV…QHKKDHPDYK (69 aa)). Basic and acidic residues predominate over residues 154-167 (LRMQHKKDHPDYKY). Residues 181–191 (EGEGQVEGEAG) are compositionally biased toward gly residues. The transactivation domain (TAM) stretch occupies residues 221–306 (PEHSSGQSHG…NGHAGHPGHV (86 aa)). The span at 247–264 (ADSKREGRSLGEGGKPHI) shows a compositional bias: basic and acidic residues. The transactivation domain (TAC) stretch occupies residues 350 to 461 (KAQVKTEGSA…QPVYTTLSRP (112 aa)). A compositionally biased stretch (polar residues) spans 441-461 (VPQSHSPTHWEQPVYTTLSRP).

It is found in the cytoplasm. The protein localises to the nucleus. Functionally, transcription factor that plays a central role in developing and mature glia. Specifically activates expression of myelin genes, during oligodendrocyte (OL) maturation, thereby playing a central role in oligodendrocyte maturation and CNS myelination. The polypeptide is Transcription factor SOX-10 (SOX10) (Gallus gallus (Chicken)).